The following is a 692-amino-acid chain: Protein arginine N-methyltransferase 7 (692 aa).

SAM-dependent MTase PRMT-type domains lie at 14-359 and 368-692; these read ENSW…YSLW and AKTV…QEKR.

Belongs to the class I-like SAM-binding methyltransferase superfamily. Protein arginine N-methyltransferase family. PRMT7 subfamily.

Essential arginine methyltransferase that can both catalyze the formation of omega-N monomethylarginine (MMA) and symmetrical dimethylarginine (sDMA). Specifically mediates the symmetrical dimethylation of arginine residues in the small nuclear ribonucleoproteins SmD1 and SmD3. This is Protein arginine N-methyltransferase 7 (Art7) from Drosophila persimilis (Fruit fly).